The primary structure comprises 359 residues: ATPase ASNA1 homolog (359 aa).

23–30 provides a ligand contact to ATP; the sequence is KGGVGKTT. The active site involves Asp63. Positions 252 and 279 each coordinate ATP. The Zn(2+) site is built by Cys291 and Cys294.

This sequence belongs to the arsA ATPase family. In terms of assembly, homodimer.

It localises to the cytoplasm. It is found in the endoplasmic reticulum. Its function is as follows. ATPase required for the post-translational delivery of tail-anchored (TA) proteins to the endoplasmic reticulum. Recognizes and selectively binds the transmembrane domain of TA proteins in the cytosol. This complex then targets to the endoplasmic reticulum by membrane-bound receptors, where the tail-anchored protein is released for insertion. This process is regulated by ATP binding and hydrolysis. ATP binding drives the homodimer towards the closed dimer state, facilitating recognition of newly synthesized TA membrane proteins. ATP hydrolysis is required for insertion. Subsequently, the homodimer reverts towards the open dimer state, lowering its affinity for the membrane-bound receptor, and returning it to the cytosol to initiate a new round of targeting. The protein is ATPase ASNA1 homolog of Trypanosoma cruzi (strain CL Brener).